We begin with the raw amino-acid sequence, 238 residues long: Probable transcriptional regulatory protein SERP0322 (238 aa).

The protein belongs to the TACO1 family. YeeN subfamily.

It is found in the cytoplasm. This chain is Probable transcriptional regulatory protein SERP0322, found in Staphylococcus epidermidis (strain ATCC 35984 / DSM 28319 / BCRC 17069 / CCUG 31568 / BM 3577 / RP62A).